The following is a 353-amino-acid chain: MTAILERRESESLWGRFCNWITSTENRLYIGWFGVLMIPTLLTATSVFIIAFIAAPPVDIDGIREPVSGSLLYGNNIISGAIIPTSAAIGLHFYPIWEAASVDEWLYNGGPYELIVLHFLLGVACYMGREWELSFRLGMRPWIAVAYSAPVAAATAVFLIYPIGQGSFSDGMPLGISGTFNFMIVFQAEHNILMHPFHMLGVAGVFGGSLFSAMHGSLVTSSLIRETTENESANEGYRFGQEEETYNIVAAHGYFGRLIFQYASFNNSRSLHFFLAAWPVVGIWFTALGISTMAFNLNGFNFNQSVVDSQGRVINTWADIINRANLGMEVMHERNAHNFPLDLAAVEAPSTNG.

The residue at position 2 (T2) is an N-acetylthreonine. T2 carries the post-translational modification Phosphothreonine. 3 helical membrane-spanning segments follow: residues 29–46 (YIGW…TATS), 118–133 (HFLL…EWEL), and 142–156 (WIAV…AATA). H118 contributes to the chlorophyll a binding site. Residue Y126 coordinates pheophytin a. [CaMn4O5] cluster is bound by residues D170 and E189. A helical transmembrane segment spans residues 197-218 (FHMLGVAGVFGGSLFSAMHGSL). H198 is a binding site for chlorophyll a. A quinone-binding positions include H215 and 264–265 (SF). Residue H215 participates in Fe cation binding. Position 272 (H272) interacts with Fe cation. A helical transmembrane segment spans residues 274-288 (FLAAWPVVGIWFTAL). H332, E333, D342, and A344 together coordinate [CaMn4O5] cluster. Positions 345–353 (AVEAPSTNG) are excised as a propeptide.

The protein belongs to the reaction center PufL/M/PsbA/D family. PSII is composed of 1 copy each of membrane proteins PsbA, PsbB, PsbC, PsbD, PsbE, PsbF, PsbH, PsbI, PsbJ, PsbK, PsbL, PsbM, PsbT, PsbX, PsbY, PsbZ, Psb30/Ycf12, at least 3 peripheral proteins of the oxygen-evolving complex and a large number of cofactors. It forms dimeric complexes. The D1/D2 heterodimer binds P680, chlorophylls that are the primary electron donor of PSII, and subsequent electron acceptors. It shares a non-heme iron and each subunit binds pheophytin, quinone, additional chlorophylls, carotenoids and lipids. D1 provides most of the ligands for the Mn4-Ca-O5 cluster of the oxygen-evolving complex (OEC). There is also a Cl(-1) ion associated with D1 and D2, which is required for oxygen evolution. The PSII complex binds additional chlorophylls, carotenoids and specific lipids. is required as a cofactor. Post-translationally, tyr-161 forms a radical intermediate that is referred to as redox-active TyrZ, YZ or Y-Z. C-terminally processed by CTPA; processing is essential to allow assembly of the oxygen-evolving complex and thus photosynthetic growth.

The protein resides in the plastid. Its subcellular location is the chloroplast thylakoid membrane. It catalyses the reaction 2 a plastoquinone + 4 hnu + 2 H2O = 2 a plastoquinol + O2. In terms of biological role, photosystem II (PSII) is a light-driven water:plastoquinone oxidoreductase that uses light energy to abstract electrons from H(2)O, generating O(2) and a proton gradient subsequently used for ATP formation. It consists of a core antenna complex that captures photons, and an electron transfer chain that converts photonic excitation into a charge separation. The D1/D2 (PsbA/PsbD) reaction center heterodimer binds P680, the primary electron donor of PSII as well as several subsequent electron acceptors. The sequence is that of Photosystem II protein D1 from Oenothera parviflora (Small-flowered evening primrose).